The sequence spans 214 residues: Reticulon-3-A (214 aa).

Positions 1–21 are disordered; sequence MAETSGPQSSHISSSSVGEKG. Positions 26-214 constitute a Reticulon domain; sequence VRDLLYWRDV…LPGALKKKSE (189 aa). 2 helical membrane-spanning segments follow: residues 46–66 and 155–175; these read MVLL…YLVL and VFNG…APIV.

As to quaternary structure, homodimer. In terms of tissue distribution, expressed in the animal hemisphere at the four-cell stage. During gastrulation, expression becomes restricted to the prospective neuroectoderm. At the early tail bud stage, expressed in the head structure. At the tadpole stage, expressed in head and neural tissues including the otic vesicle and optic nerve.

Its subcellular location is the endoplasmic reticulum membrane. It is found in the golgi apparatus membrane. In terms of biological role, may be involved in membrane trafficking in the early secretory pathway. The chain is Reticulon-3-A (rtn3-a) from Xenopus laevis (African clawed frog).